The sequence spans 184 residues: Phosphorelay intermediate protein YPD1 (184 aa).

Residues 30–125 (EEGFSKSLVE…SAENVAVNDG (96 aa)) form the HPt domain. Phosphohistidine is present on His69. Residues 120 to 152 (VAVNDGETNPENGSNGNETSNNKTNTSNIPDES) form a disordered region. Over residues 125 to 147 (GETNPENGSNGNETSNNKTNTSN) the composition is skewed to low complexity.

Belongs to the YPD1 family.

It localises to the cytoplasm. It is found in the nucleus. In terms of biological role, phosphorelay intermediate protein that is part of the bifurcated SLN1-YPD1-SKN7/SSK1 two-component regulatory system, which controls activity of the HOG1 pathway and gene expression in response to oxidative stress and probably to changes in the osmolarity of the extracellular environment. Catalyzes the phosphoryl group transfer from the membrane-bound histidine kinase SLN1 to two distinct response regulators SSK1 and SKN7. The chain is Phosphorelay intermediate protein YPD1 (YPD1) from Candida albicans (strain SC5314 / ATCC MYA-2876) (Yeast).